We begin with the raw amino-acid sequence, 1577 residues long: MAP kinase-activating death domain protein (1577 aa).

The uDENN domain maps to 13-267 (YLVIVGARHP…VPVSGQKRVD (255 aa)). Residues 106–121 (KEKVEGGAGPRGKEGA) show a composition bias toward basic and acidic residues. Residues 106-166 (KEKVEGGAGP…WGKRRAKAGS (61 aa)) form a disordered region. Residues 123-140 (TSGASEEAATGSSESGST) are compositionally biased toward low complexity. The span at 141 to 156 (LQPPSADSTPDINQSP) shows a compositional bias: polar residues. Ser-155 is subject to Phosphoserine. One can recognise a cDENN domain in the interval 288-428 (RFTLVDFPLH…ESLELKKHLK (141 aa)). The dDENN domain maps to 430–564 (ALASMSLNTQ…LNPSNYAFQR (135 aa)). Disordered regions lie at residues 604-635 (LSVP…SSYS) and 676-840 (QPQK…NSTE). Acidic residues predominate over residues 614 to 629 (SDPTEDSGSDSQDYDD). Phosphoserine occurs at positions 688 and 691. Positions 688–698 (SENSQENPPLR) are enriched in polar residues. The segment covering 699-715 (SSSSTTASSSPSTVVHS) has biased composition (low complexity). A compositionally biased stretch (polar residues) spans 793–803 (PRFSQHVSGSR). Ser-812, Ser-817, and Ser-819 each carry phosphoserine. The segment covering 826–839 (RASSPNSTVSNNST) has biased composition (low complexity). Phosphoserine is present on residues Ser-857, Ser-861, Ser-915, Ser-920, Ser-929, and Ser-1058. 3 disordered regions span residues 912–940 (QKSS…SSEN), 1050–1109 (KEPD…DTRS), and 1127–1272 (EVKK…RSSE). Residues 928–938 (SSPQGRSSNSS) are compositionally biased toward low complexity. 2 positions are modified to phosphothreonine: Thr-1060 and Thr-1065. Ser-1109 carries the post-translational modification Phosphoserine. Residues 1127–1141 (EVKKQKALEKQRPEG) are compositionally biased toward basic and acidic residues. Over residues 1157-1172 (QMSADSGVSLTSASQR) the composition is skewed to polar residues. Over residues 1189-1203 (SSSQDSEVSTVSNSS) the composition is skewed to low complexity. Positions 1232 to 1248 (SRATLSDSEIETNSATS) are enriched in polar residues. Residue Thr-1235 is modified to Phosphothreonine. 2 positions are modified to phosphoserine: Ser-1237 and Ser-1266. One can recognise a Death domain in the interval 1336-1411 (GMDQGPQEMI…GLVYSQQVNE (76 aa)).

Belongs to the MADD family. As to quaternary structure, interacts (via death domain) with TNFRSF1A (via death domain). Interacts with PIDD1. Interacts with YWHAZ. Interacts (via death domain) with KIF1B; links the motor KIF1B to Rab3-carrying vesicles in anterograde synaptic vesicle transport. Interacts with KIF1A. Interacts (via uDENN domain) with RAB3A, RAB3B, RAB3C and RAB3D; the GTP-bound form of the Rab proteins is preferred for interaction. Expressed in the brain.

The protein localises to the cell membrane. The protein resides in the cytoplasm. It localises to the cell projection. Its subcellular location is the axon. Its function is as follows. Guanyl-nucleotide exchange factor that regulates small GTPases of the Rab family. Converts GDP-bound inactive form of RAB27A and RAB27B to the GTP-bound active forms. Converts GDP-bound inactive form of RAB3A, RAB3C and RAB3D to the GTP-bound active forms, GTPases involved in synaptic vesicle exocytosis and vesicle secretion. Plays a role in synaptic vesicle formation and in vesicle trafficking at the neuromuscular junction. Involved in up-regulating a post-docking step of synaptic exocytosis in central synapses. Probably by binding to the motor proteins KIF1B and KIF1A, mediates motor-dependent transport of GTP-RAB3A-positive vesicles to the presynaptic nerve terminals. Plays a role in TNFA-mediated activation of the MAPK pathway, including ERK1/2. May link TNFRSF1A with MAP kinase activation. May be involved in the regulation of TNFA-induced apoptosis. The chain is MAP kinase-activating death domain protein from Mus musculus (Mouse).